A 152-amino-acid chain; its full sequence is Ribosome maturation factor RimP (152 aa).

The protein belongs to the RimP family.

Its subcellular location is the cytoplasm. Its function is as follows. Required for maturation of 30S ribosomal subunits. This Serratia proteamaculans (strain 568) protein is Ribosome maturation factor RimP.